Here is a 129-residue protein sequence, read N- to C-terminus: Ribosome-binding factor A (129 aa).

This sequence belongs to the RbfA family. In terms of assembly, monomer. Binds 30S ribosomal subunits, but not 50S ribosomal subunits or 70S ribosomes.

The protein resides in the cytoplasm. Its function is as follows. One of several proteins that assist in the late maturation steps of the functional core of the 30S ribosomal subunit. Associates with free 30S ribosomal subunits (but not with 30S subunits that are part of 70S ribosomes or polysomes). Required for efficient processing of 16S rRNA. May interact with the 5'-terminal helix region of 16S rRNA. This chain is Ribosome-binding factor A, found in Desulfosudis oleivorans (strain DSM 6200 / JCM 39069 / Hxd3) (Desulfococcus oleovorans).